A 98-amino-acid polypeptide reads, in one-letter code: Small ribosomal subunit protein bS20 (98 aa).

Residues 1 to 12 (MAPKKTTKKGGP) show a composition bias toward basic residues. The segment at 1 to 20 (MAPKKTTKKGGPQKRPSAEK) is disordered.

This sequence belongs to the bacterial ribosomal protein bS20 family.

In terms of biological role, binds directly to 16S ribosomal RNA. This is Small ribosomal subunit protein bS20 from Chlamydia caviae (strain ATCC VR-813 / DSM 19441 / 03DC25 / GPIC) (Chlamydophila caviae).